We begin with the raw amino-acid sequence, 279 residues long: Acetylglutamate kinase (279 aa).

Residues 64 to 65 (GG), R86, and N177 each bind substrate.

Belongs to the acetylglutamate kinase family. ArgB subfamily.

It localises to the cytoplasm. The catalysed reaction is N-acetyl-L-glutamate + ATP = N-acetyl-L-glutamyl 5-phosphate + ADP. It participates in amino-acid biosynthesis; L-arginine biosynthesis; N(2)-acetyl-L-ornithine from L-glutamate: step 2/4. Its function is as follows. Catalyzes the ATP-dependent phosphorylation of N-acetyl-L-glutamate. The polypeptide is Acetylglutamate kinase (Campylobacter jejuni subsp. jejuni serotype O:6 (strain 81116 / NCTC 11828)).